Here is a 397-residue protein sequence, read N- to C-terminus: CCA-adding enzyme (397 aa).

ATP-binding residues include G26 and R29. CTP contacts are provided by G26 and R29. Residues D39 and D41 each coordinate Mg(2+). Positions 110, 153, 156, 159, and 162 each coordinate ATP. Residues R110, D153, R156, R159, and R162 each contribute to the CTP site.

Belongs to the tRNA nucleotidyltransferase/poly(A) polymerase family. Bacterial CCA-adding enzyme type 3 subfamily. Homodimer. It depends on Mg(2+) as a cofactor.

The enzyme catalyses a tRNA precursor + 2 CTP + ATP = a tRNA with a 3' CCA end + 3 diphosphate. The catalysed reaction is a tRNA with a 3' CCA end + 2 CTP + ATP = a tRNA with a 3' CCACCA end + 3 diphosphate. Functionally, catalyzes the addition and repair of the essential 3'-terminal CCA sequence in tRNAs without using a nucleic acid template. Adds these three nucleotides in the order of C, C, and A to the tRNA nucleotide-73, using CTP and ATP as substrates and producing inorganic pyrophosphate. tRNA 3'-terminal CCA addition is required both for tRNA processing and repair. Also involved in tRNA surveillance by mediating tandem CCA addition to generate a CCACCA at the 3' terminus of unstable tRNAs. While stable tRNAs receive only 3'-terminal CCA, unstable tRNAs are marked with CCACCA and rapidly degraded. The sequence is that of CCA-adding enzyme from Bacillus cereus (strain G9842).